Here is a 65-residue protein sequence, read N- to C-terminus: Small ribosomal subunit protein bS21A (65 aa).

This sequence belongs to the bacterial ribosomal protein bS21 family.

The sequence is that of Small ribosomal subunit protein bS21A from Francisella tularensis subsp. holarctica (strain LVS).